The chain runs to 828 residues: Periplasmic nitrate reductase (828 aa).

The segment at residues 1-32 (MNLSRRDFMKANAAMAAATAAGLSIPVKNVEA) is a signal peptide (tat-type signal). In terms of domain architecture, 4Fe-4S Mo/W bis-MGD-type spans 37-93 (IKWDKAVCRFCGTGCAVLVGTKDGRVVASQGDPDAEVNRGLNCIKGYFLPKIMYGKD). [4Fe-4S] cluster is bound by residues C44, C47, C51, and C79. Mo-bis(molybdopterin guanine dinucleotide) contacts are provided by residues K81, Q148, N173, C177, 210 to 217 (WGSNMAEM), 241 to 245 (STFEH), M371, Q375, N481, 507 to 508 (SD), K530, D557, and 717 to 726 (TGRVLEHWHT). Position 793 (F793) interacts with substrate. Mo-bis(molybdopterin guanine dinucleotide) is bound by residues N801 and K818.

It belongs to the prokaryotic molybdopterin-containing oxidoreductase family. NasA/NapA/NarB subfamily. Component of the periplasmic nitrate reductase NapAB complex composed of NapA and NapB. The cofactor is [4Fe-4S] cluster. It depends on Mo-bis(molybdopterin guanine dinucleotide) as a cofactor. Predicted to be exported by the Tat system. The position of the signal peptide cleavage has not been experimentally proven.

The protein localises to the periplasm. The catalysed reaction is 2 Fe(II)-[cytochrome] + nitrate + 2 H(+) = 2 Fe(III)-[cytochrome] + nitrite + H2O. Catalytic subunit of the periplasmic nitrate reductase complex NapAB. Receives electrons from NapB and catalyzes the reduction of nitrate to nitrite. In Aggregatibacter actinomycetemcomitans (Actinobacillus actinomycetemcomitans), this protein is Periplasmic nitrate reductase.